A 216-amino-acid polypeptide reads, in one-letter code: DNA-binding protein HupB (216 aa).

Residue G2 is a propeptide, removed; alternate. M3 is modified (N-acetylmethionine). Positions 3 to 92 are bacterial histone-like domain; sequence MNKAELIDVL…PGAQFKAVVS (90 aa). An N6-acetyllysine mark is found at K5, K74, K88, K105, K118, and K135. The segment at 102-216 is disordered; it reads PAVKRGVGAS…KKATARRGRK (115 aa). Residues 103 to 216 are degenerate repeats region; it reads AVKRGVGASA…KKATARRGRK (114 aa). Positions 104–114 are enriched in low complexity; the sequence is VKRGVGASAAK. The segment covering 115-216 has biased composition (basic residues); sequence KVAKKAPAKK…KKATARRGRK (102 aa). Position 140 is an N6,N6,N6-trimethyllysine (K140). K148 and K169 each carry N6-acetyllysine.

Belongs to the bacterial histone-like protein family. Long actinobacterial subfamily. In terms of assembly, oligomerizes. Interacts with topoisomerase 1 (topA). Interacts with Eis. Interacts with antigen 85 proteins (fbpA, fbpB, fbpC). Post-translationally, probably acetylated by Eis in vivo. In vitro acetylated by Eis (strain H37Rv and H37Ra) on many more residues than those identified in vivo. Deacetylated in vitro by NAD-dependent protein deacylase (Rv1151c). In terms of processing, trimethylated on Lys-140 by human SUV39H1; trimethylation inhibits mycobacterial growth. SUV39H1 probably also trimethylates another residue. Probably succinylated by Rv0802c and desuccinylated by NAD-dependent protein deacylase (Rv1151c).

It is found in the cytoplasm. Its subcellular location is the nucleoid. It localises to the secreted. The protein localises to the cell wall. The enzyme catalyses 4 Fe(2+) + O2 + 4 H(+) = 4 Fe(3+) + 2 H2O. In terms of biological role, a nucleoid-associated protein (NAP) that probably plays a role in chromosome compactation. Binds DNA non-specifically, with greater affinity for supercoiled than linear DNA, binds well to nicked DNA, gapped and cruciform DNA. Has a preference for A:T rich DNA. Required for activation of the mtbB operon. Binds the mtbB promoter in the presence of iron, binding is seen with as little as 25 uM Fe(2+) and increases with increasing Fe(2+). RNase E and HupB jointly contribute to cellular adaptation to changing growth conditions and survival during antibiotic treatment and in the host. Plays a role in stress survival. Stimulates supercoiling relaxation by topoisomerase 1 (Top1, topA). Its function is as follows. Binds Fe(3+) but not Fe(2+). Has ferroxidase activity, converts Fe(2+) into Fe(3+) and in the presence of H(2)O(2) prevents the generation of hydroxyl radicals (the Fenton reaction). Protects DNA from damage in the presence of FeSO(4) and H(2)O(2). May function in iron storage. Involved in iron uptake by bacteria (either Fe(3+) or extracellular carboxymycobactin); antibodies against HupB block uptake of both. Following uptake iron is mostly found in the iron siderophores carboxymycobactin (CMb, extracellular) or mycobactin (Mb, lipophilic). Facilitates transfer of iron from CMb to Mb when liposomes plus a cell wall lysate are incubated with CMb. Binds iron, ferri-CMb and ferri-Mb; has 10-fold higher affinity for ferri-Mb. Suggested to transfer iron from CBm to Mb at the cell membrane. Functionally, required for biofilm formation; trimethylation by recombinant human SUV39H1 (a histone methyltransferase) inhibits biofilm formation. Induces lymphoproliferation, particularly in health tuberculin reactors, and is immunogenic. Maybe involved in pathogenesis of inflammatory bowel disease (IBD) in patients with ulcerative colitis and Crohn disease (CD). Bound by anti-neutrophil cytoplasmic antibodies (pANCA), which are a hallmark of IBD. The binding is due to pANCA directed against H1-3 cross-reacting with DBH epitopes. In CD, target of a strong IgA response. May play a role in cell wall assembly. In vitro at low levels enhances formation of TMM and TDM by antigen 85 proteins (fbpA, fbpB, fbpC), at higher levels inhibits TMM and TDM formation. In Mycobacterium tuberculosis (strain ATCC 25618 / H37Rv), this protein is DNA-binding protein HupB.